A 352-amino-acid chain; its full sequence is N-terminal EF-hand calcium-binding protein 1 (352 aa).

Ser4 carries the post-translational modification Phosphoserine. 2 consecutive EF-hand domains span residues 26 to 61 (KGMSIFLDILRRADKNDDGKLSFEEFKAYFADGVLS) and 60 to 95 (LSGEELHELFHTIDTHNTNNLDTEELCEYFSQHLGE). Residues Asp39, Asn41, Asp43, Lys45, and Glu50 each coordinate Ca(2+). The stretch at 135-163 (LLKETLNQLQSLQNSLECAMETTEEQTRQ) forms a coiled coil. Positions 180 to 202 (GKRSSRRVQRHNSFSPNSPQFNV) are disordered. Positions 190–202 (HNSFSPNSPQFNV) are enriched in polar residues. A phosphoserine mark is found at Ser192 and Ser197. Residues 209–275 (EEDNQWMTQI…EEFQLALKHY (67 aa)) are a coiled coil. One can recognise an ABM domain in the interval 252–340 (MLVQRQMSVI…LETPELTSTM (89 aa)).

In terms of assembly, interacts with STX1. May interact with CPNE6.

It localises to the cytoplasm. The chain is N-terminal EF-hand calcium-binding protein 1 (NECAB1) from Pongo abelii (Sumatran orangutan).